A 257-amino-acid polypeptide reads, in one-letter code: GTP cyclohydrolase FolE2 (257 aa).

This sequence belongs to the GTP cyclohydrolase IV family.

The enzyme catalyses GTP + H2O = 7,8-dihydroneopterin 3'-triphosphate + formate + H(+). The protein operates within cofactor biosynthesis; 7,8-dihydroneopterin triphosphate biosynthesis; 7,8-dihydroneopterin triphosphate from GTP: step 1/1. Converts GTP to 7,8-dihydroneopterin triphosphate. This Dictyoglomus thermophilum (strain ATCC 35947 / DSM 3960 / H-6-12) protein is GTP cyclohydrolase FolE2.